The following is a 179-amino-acid chain: Large ribosomal subunit protein uL5 (179 aa).

It belongs to the universal ribosomal protein uL5 family. As to quaternary structure, part of the 50S ribosomal subunit; part of the 5S rRNA/L5/L18/L25 subcomplex. Contacts the 5S rRNA and the P site tRNA. Forms a bridge to the 30S subunit in the 70S ribosome.

Functionally, this is one of the proteins that bind and probably mediate the attachment of the 5S RNA into the large ribosomal subunit, where it forms part of the central protuberance. In the 70S ribosome it contacts protein S13 of the 30S subunit (bridge B1b), connecting the 2 subunits; this bridge is implicated in subunit movement. Contacts the P site tRNA; the 5S rRNA and some of its associated proteins might help stabilize positioning of ribosome-bound tRNAs. This chain is Large ribosomal subunit protein uL5, found in Geotalea daltonii (strain DSM 22248 / JCM 15807 / FRC-32) (Geobacter daltonii).